The primary structure comprises 2314 residues: Protein Ycf2 (2314 aa).

An ATP-binding site is contributed by 1653–1660 (GSIGTGRS).

It belongs to the Ycf2 family.

The protein resides in the plastid. The protein localises to the chloroplast stroma. Probable ATPase of unknown function. Its presence in a non-photosynthetic plant (Epifagus virginiana) and experiments in tobacco indicate that it has an essential function which is probably not related to photosynthesis. The protein is Protein Ycf2 of Piper cenocladum (Ant piper).